Here is a 392-residue protein sequence, read N- to C-terminus: Probable tRNA sulfurtransferase (392 aa).

One can recognise a THUMP domain in the interval 59–167; sequence ADITDRVKKV…DQAFVFSNKI (109 aa). ATP is bound by residues 184 to 185, 209 to 210, R266, G288, and Q297; these read LL and HF.

Belongs to the ThiI family.

The protein localises to the cytoplasm. It carries out the reaction [ThiI sulfur-carrier protein]-S-sulfanyl-L-cysteine + a uridine in tRNA + 2 reduced [2Fe-2S]-[ferredoxin] + ATP + H(+) = [ThiI sulfur-carrier protein]-L-cysteine + a 4-thiouridine in tRNA + 2 oxidized [2Fe-2S]-[ferredoxin] + AMP + diphosphate. The enzyme catalyses [ThiS sulfur-carrier protein]-C-terminal Gly-Gly-AMP + S-sulfanyl-L-cysteinyl-[cysteine desulfurase] + AH2 = [ThiS sulfur-carrier protein]-C-terminal-Gly-aminoethanethioate + L-cysteinyl-[cysteine desulfurase] + A + AMP + 2 H(+). The protein operates within cofactor biosynthesis; thiamine diphosphate biosynthesis. Functionally, catalyzes the ATP-dependent transfer of a sulfur to tRNA to produce 4-thiouridine in position 8 of tRNAs, which functions as a near-UV photosensor. Also catalyzes the transfer of sulfur to the sulfur carrier protein ThiS, forming ThiS-thiocarboxylate. This is a step in the synthesis of thiazole, in the thiamine biosynthesis pathway. The sulfur is donated as persulfide by IscS. In Alkaliphilus oremlandii (strain OhILAs) (Clostridium oremlandii (strain OhILAs)), this protein is Probable tRNA sulfurtransferase.